A 429-amino-acid polypeptide reads, in one-letter code: MAKIVDIKGREVLDSRGNPTVEADVILEGGIVGSACAPSGASTGSREALELRDGDKSRYLGKGVLKAVANINGPIRDLLLGKDATDQQALDRAMIELDGTENKAKLGANAILAVSLAAAKAAAQAKGVPLYAHIADLNGTPGVYSMPVPMMNIINGGEHADNNVDIQEFMVQPVGAKNFADALRMGAEIFHHLKAVLKARGLNTAVGDEGGFAPNLASNEDALAAIAEAVANAGYKLGDDVTLALDCASSEFFKDGKYDLEGEGKVFDAAGFADYLAGLTQRYPIISIEDGMDESDWAGWKVLTDKIGAKVQLVGDDLFVTNTKILKRGIDEKIGNSILIKFNQIGSLTETLEAIQMAKAAGFTAVISHRSGETEDSTIADLAVGTAAGQIKTGSLCRSDRVSKYNQLLRIEEQLGGKAPYKGRAEFRG.

Q167 provides a ligand contact to (2R)-2-phosphoglycerate. Catalysis depends on E209, which acts as the Proton donor. Residues D246, E289, and D316 each coordinate Mg(2+). 4 residues coordinate (2R)-2-phosphoglycerate: K341, R370, S371, and K392. The active-site Proton acceptor is K341.

The protein belongs to the enolase family. In terms of assembly, component of the RNA degradosome, a multiprotein complex involved in RNA processing and mRNA degradation. Mg(2+) is required as a cofactor.

It is found in the cytoplasm. The protein localises to the secreted. It localises to the cell surface. The catalysed reaction is (2R)-2-phosphoglycerate = phosphoenolpyruvate + H2O. The protein operates within carbohydrate degradation; glycolysis; pyruvate from D-glyceraldehyde 3-phosphate: step 4/5. In terms of biological role, catalyzes the reversible conversion of 2-phosphoglycerate (2-PG) into phosphoenolpyruvate (PEP). It is essential for the degradation of carbohydrates via glycolysis. The polypeptide is Enolase (Ectopseudomonas mendocina (strain ymp) (Pseudomonas mendocina)).